A 323-amino-acid polypeptide reads, in one-letter code: rRNA 2'-O-methyltransferase fibrillarin (323 aa).

The disordered stretch occupies residues 1–80 (MSFRPGSRGG…GARGGAKGGA (80 aa)). A compositionally biased stretch (gly residues) spans 7–78 (SRGGARGGRG…RGGARGGAKG (72 aa)). An asymmetric dimethylarginine mark is found at R8, R12, R15, R19, R25, R29, R35, R39, R43, R49, R53, R57, R61, R65, R69, and R73. Residues 175–176 (TS), 194–195 (EF), 219–220 (DA), and 239–242 (DVAQ) contribute to the S-adenosyl-L-methionine site.

This sequence belongs to the methyltransferase superfamily. Fibrillarin family. In terms of assembly, component of box C/D small nucleolar ribonucleoprotein (snoRNP) particles that contain SNU13, NOP1, SIK1/NOP56 and NOP58, plus a guide RNA. Post-translationally, by homology to other fibrillarins, some or all of the N-terminal domain arginines are modified to asymmetric dimethylarginine (DMA).

It localises to the nucleus. The protein localises to the nucleolus. It catalyses the reaction L-glutaminyl-[histone H2A] + S-adenosyl-L-methionine = N(5)-methyl-L-glutaminyl-[histone H2A] + S-adenosyl-L-homocysteine + H(+). Its function is as follows. S-adenosyl-L-methionine-dependent methyltransferase that has the ability to methylate both RNAs and proteins. Involved in pre-rRNA processing. Utilizes the methyl donor S-adenosyl-L-methionine to catalyze the site-specific 2'-hydroxyl methylation of ribose moieties in pre-ribosomal RNA. Site specificity is provided by a guide RNA that base pairs with the substrate. Methylation occurs at a characteristic distance from the sequence involved in base pairing with the guide RNA. Also acts as a protein methyltransferase by mediating methylation of 'Gln-105' of histone H2A (H2AQ105me), a modification that impairs binding of the FACT complex and is specifically present at 35S ribosomal DNA locus. The chain is rRNA 2'-O-methyltransferase fibrillarin (NOP1) from Candida glabrata (strain ATCC 2001 / BCRC 20586 / JCM 3761 / NBRC 0622 / NRRL Y-65 / CBS 138) (Yeast).